Here is a 94-residue protein sequence, read N- to C-terminus: Integration host factor subunit beta (94 aa).

The protein belongs to the bacterial histone-like protein family. Heterodimer of an alpha and a beta chain.

In terms of biological role, this protein is one of the two subunits of integration host factor, a specific DNA-binding protein that functions in genetic recombination as well as in transcriptional and translational control. This chain is Integration host factor subunit beta, found in Mesorhizobium japonicum (strain LMG 29417 / CECT 9101 / MAFF 303099) (Mesorhizobium loti (strain MAFF 303099)).